The primary structure comprises 302 residues: Ribonucleoside-diphosphate reductase small subunit (302 aa).

3 residues coordinate Fe cation: Glu-61, Glu-91, and His-94. The active site involves Tyr-98. A helical transmembrane segment spans residues 147–167; that stretch reads ILVFLLIEGIFFISSFYSIAL. The Fe cation site is built by Glu-154, Glu-188, and His-191.

Belongs to the ribonucleoside diphosphate reductase small chain family. Heterotetramer composed of a homodimer of the large subunit (R1) and a homodimer of the small subunit (R2). Larger multisubunit protein complex are also active, composed of (R1)n(R2)n. The cofactor is Fe cation.

The protein resides in the host membrane. The enzyme catalyses a 2'-deoxyribonucleoside 5'-diphosphate + [thioredoxin]-disulfide + H2O = a ribonucleoside 5'-diphosphate + [thioredoxin]-dithiol. Ribonucleoside-diphosphate reductase holoenzyme provides the precursors necessary for viral DNA synthesis. Allows virus growth in non-dividing cells, as well as reactivation from latency in infected hosts. Catalyzes the biosynthesis of deoxyribonucleotides from the corresponding ribonucleotides. In Homo sapiens (Human), this protein is Ribonucleoside-diphosphate reductase small subunit.